The sequence spans 751 residues: NAD(P)H-quinone oxidoreductase subunit 5, chloroplastic (751 aa).

16 helical membrane passes run 9-29 (WIIPFIPLTVPLLIGAGLIIF), 40-60 (WAFPSILLLSLVMLFSTKLSI), 89-109 (VDPLTSIMSMLITTVGILVLI), 125-145 (FAYLSFFNTSMLGLVTSSNFI), 147-167 (IYIFWELVGMCSYLLIGFWFT), 185-205 (GDFGLLLGILGLYWLTGSFEF), 219-239 (NEVHFLVGTVCTFLLFAGAVA), 258-278 (TPISALIHAATMVAAGIFLVA), 280-300 (LFPLLIVTPFILNLIALVGII), 327-347 (LGYMMLALGMGSYRAALFHLI), 354-374 (ALLFLGSGCVIHSMEAIVGYS), 396-416 (TAFLLGTLSLSGIPPLACFWS), 425-445 (WLYSPIFAIISWATVGFTAFY), 543-563 (LFPLLVLIIFTGVIGFIGIPF), 599-619 (FLTNATLSVSIAYSGIVLASF), and 719-739 (ISSYLFLYLLYASIFLLIYYF).

The protein belongs to the complex I subunit 5 family. In terms of assembly, NDH is composed of at least 16 different subunits, 5 of which are encoded in the nucleus.

The protein localises to the plastid. It is found in the chloroplast thylakoid membrane. The enzyme catalyses a plastoquinone + NADH + (n+1) H(+)(in) = a plastoquinol + NAD(+) + n H(+)(out). It carries out the reaction a plastoquinone + NADPH + (n+1) H(+)(in) = a plastoquinol + NADP(+) + n H(+)(out). In terms of biological role, NDH shuttles electrons from NAD(P)H:plastoquinone, via FMN and iron-sulfur (Fe-S) centers, to quinones in the photosynthetic chain and possibly in a chloroplast respiratory chain. The immediate electron acceptor for the enzyme in this species is believed to be plastoquinone. Couples the redox reaction to proton translocation, and thus conserves the redox energy in a proton gradient. The polypeptide is NAD(P)H-quinone oxidoreductase subunit 5, chloroplastic (ndhF) (Fagopyrum esculentum subsp. ancestrale (Wild buckwheat)).